Here is a 344-residue protein sequence, read N- to C-terminus: Fructose-1,6-bisphosphatase class 1 (344 aa).

Glu92, Asp115, Leu117, and Asp118 together coordinate Mg(2+). Residues 118–121 (DGSS), Asn211, Tyr244, and Lys274 each bind substrate. Glu280 is a Mg(2+) binding site.

It belongs to the FBPase class 1 family. In terms of assembly, homotetramer. Mg(2+) is required as a cofactor.

It localises to the cytoplasm. It catalyses the reaction beta-D-fructose 1,6-bisphosphate + H2O = beta-D-fructose 6-phosphate + phosphate. Its pathway is carbohydrate biosynthesis; gluconeogenesis. The chain is Fructose-1,6-bisphosphatase class 1 from Aeromonas hydrophila subsp. hydrophila (strain ATCC 7966 / DSM 30187 / BCRC 13018 / CCUG 14551 / JCM 1027 / KCTC 2358 / NCIMB 9240 / NCTC 8049).